The sequence spans 207 residues: Acyl-homoserine-lactone synthase (207 aa).

Belongs to the autoinducer synthase family.

The catalysed reaction is a fatty acyl-[ACP] + S-adenosyl-L-methionine = an N-acyl-L-homoserine lactone + S-methyl-5'-thioadenosine + holo-[ACP] + H(+). Required for the synthesis of N-butanoyl-L-homoserine lactone (BHL), an autoinducer molecule which binds to AhyR. This chain is Acyl-homoserine-lactone synthase (ahyI), found in Aeromonas hydrophila.